Here is a 446-residue protein sequence, read N- to C-terminus: Xylose isomerase 1 (446 aa).

Catalysis depends on residues H109 and D112. Mg(2+) contacts are provided by E240, E276, H279, D304, D315, D317, and D347.

The protein belongs to the xylose isomerase family. Homotetramer. It depends on Mg(2+) as a cofactor.

Its subcellular location is the cytoplasm. It carries out the reaction alpha-D-xylose = alpha-D-xylulofuranose. The chain is Xylose isomerase 1 from Xanthomonas campestris pv. campestris (strain 8004).